An 86-amino-acid chain; its full sequence is Small ribosomal subunit protein uS17 (86 aa).

It belongs to the universal ribosomal protein uS17 family. As to quaternary structure, part of the 30S ribosomal subunit.

One of the primary rRNA binding proteins, it binds specifically to the 5'-end of 16S ribosomal RNA. The chain is Small ribosomal subunit protein uS17 from Helicobacter pylori (strain P12).